The primary structure comprises 449 residues: Glucose-6-phosphate isomerase (449 aa).

Position 38 is a phosphothreonine (Thr38). The Proton donor role is filled by Glu290. Active-site residues include His311 and Lys425.

It belongs to the GPI family.

The protein localises to the cytoplasm. It carries out the reaction alpha-D-glucose 6-phosphate = beta-D-fructose 6-phosphate. It participates in carbohydrate biosynthesis; gluconeogenesis. It functions in the pathway carbohydrate degradation; glycolysis; D-glyceraldehyde 3-phosphate and glycerone phosphate from D-glucose: step 2/4. In terms of biological role, catalyzes the reversible isomerization of glucose-6-phosphate to fructose-6-phosphate. The sequence is that of Glucose-6-phosphate isomerase from Geobacillus thermodenitrificans (strain NG80-2).